Here is a 295-residue protein sequence, read N- to C-terminus: Indole-3-glycerol phosphate synthase (295 aa).

It belongs to the TrpC family.

It carries out the reaction 1-(2-carboxyphenylamino)-1-deoxy-D-ribulose 5-phosphate + H(+) = (1S,2R)-1-C-(indol-3-yl)glycerol 3-phosphate + CO2 + H2O. It participates in amino-acid biosynthesis; L-tryptophan biosynthesis; L-tryptophan from chorismate: step 4/5. In Prochlorococcus marinus (strain MIT 9515), this protein is Indole-3-glycerol phosphate synthase.